The sequence spans 330 residues: Heat-inducible transcription repressor HrcA (330 aa).

The protein belongs to the HrcA family.

Functionally, negative regulator of class I heat shock genes (grpE-dnaK-dnaJ and groELS operons). Prevents heat-shock induction of these operons. This chain is Heat-inducible transcription repressor HrcA, found in Synechococcus sp. (strain RCC307).